The primary structure comprises 213 residues: Kynurenine formamidase (213 aa).

Position 18 (Trp18) interacts with substrate. Zn(2+)-binding residues include His48, His52, and Asp54. His58 (proton donor/acceptor) is an active-site residue. Residues His160 and Glu172 each coordinate Zn(2+).

It belongs to the Cyclase 1 superfamily. KynB family. Homodimer. Zn(2+) serves as cofactor.

The enzyme catalyses N-formyl-L-kynurenine + H2O = L-kynurenine + formate + H(+). It functions in the pathway amino-acid degradation; L-tryptophan degradation via kynurenine pathway; L-kynurenine from L-tryptophan: step 2/2. In terms of biological role, catalyzes the hydrolysis of N-formyl-L-kynurenine to L-kynurenine, the second step in the kynurenine pathway of tryptophan degradation. The polypeptide is Kynurenine formamidase (Burkholderia orbicola (strain MC0-3)).